The following is a 487-amino-acid chain: Photosystem II CP43 reaction center protein (487 aa).

Positions 1-28 (MKVFVLGWLLKINLMKTLYSQRRFYHVE) are excised as a propeptide. 5 consecutive transmembrane segments (helical) span residues 83 to 107 (LFEV…PHLA), 148 to 169 (LIGP…RDKN), 192 to 214 (KSLF…RFVS), 269 to 289 (KPFA…LSYS), and 305 to 326 (WYNN…ASQA). Position 381 (Glu-381) interacts with [CaMn4O5] cluster. Residues 461 to 485 (RARAAAAGFEKGINRENEPVLSMRP) form a helical membrane-spanning segment.

The protein belongs to the PsbB/PsbC family. PsbC subfamily. In terms of assembly, PSII is composed of 1 copy each of membrane proteins PsbA, PsbB, PsbC, PsbD, PsbE, PsbF, PsbH, PsbI, PsbJ, PsbK, PsbL, PsbM, PsbT, PsbX, PsbY, PsbZ, Psb30/Ycf12, at least 3 peripheral proteins of the oxygen-evolving complex and a large number of cofactors. It forms dimeric complexes. Binds multiple chlorophylls and provides some of the ligands for the Ca-4Mn-5O cluster of the oxygen-evolving complex. It may also provide a ligand for a Cl- that is required for oxygen evolution. PSII binds additional chlorophylls, carotenoids and specific lipids. serves as cofactor.

Its subcellular location is the plastid. The protein localises to the chloroplast thylakoid membrane. Its function is as follows. One of the components of the core complex of photosystem II (PSII). It binds chlorophyll and helps catalyze the primary light-induced photochemical processes of PSII. PSII is a light-driven water:plastoquinone oxidoreductase, using light energy to abstract electrons from H(2)O, generating O(2) and a proton gradient subsequently used for ATP formation. The chain is Photosystem II CP43 reaction center protein from Porphyra purpurea (Red seaweed).